We begin with the raw amino-acid sequence, 144 residues long: Eukaryotic translation initiation factor 1A, X-chromosomal (144 aa).

Residues 1–15 (MPKNKGKGGKNRRRG) show a composition bias toward basic residues. Disordered regions lie at residues 1 to 26 (MPKNKGKGGKNRRRGKNENESEKREL) and 114 to 144 (KINETDTFGPGDDDEIQFDDIGDDDEDIDDI). The segment covering 16-26 (KNENESEKREL) has biased composition (basic and acidic residues). Residues 22–96 (EKRELVFKED…NKADVILKYN (75 aa)) form the S1-like domain. Residues 124 to 144 (GDDDEIQFDDIGDDDEDIDDI) are compositionally biased toward acidic residues.

This sequence belongs to the eIF-1A family. Component of the 43S pre-initiation complex (43S PIC), which is composed of the 40S ribosomal subunit, EIF1, eIF1A (EIF1AX), eIF3 complex, EIF5 and eIF2-GTP-initiator tRNA complex (eIF2 ternary complex). Interacts with EIF5; this interaction contributes to the maintenance of EIF1 within the open 43S PIC. Interacts through its C-terminal domain (CTD) with the CTD of EIF5B; from the location of the start codon by the 43S complex until the formation of the 80S complex. As to quaternary structure, (Microbial infection) Interacts with human respiratory syncytial virus (HRSV) nucleoprotein; this interaction recruits EIF1AX to the viral replication complex to facilitate viral genomic RNA synthesis and virus production.

The protein localises to the cytoplasm. Its function is as follows. Component of the 43S pre-initiation complex (43S PIC), which binds to the mRNA cap-proximal region, scans mRNA 5'-untranslated region, and locates the initiation codon. This protein enhances formation of the cap-proximal complex. Together with EIF1, facilitates scanning, start codon recognition, promotion of the assembly of 48S complex at the initiation codon (43S PIC becomes 48S PIC after the start codon is reached), and dissociation of aberrant complexes. After start codon location, together with EIF5B orients the initiator methionine-tRNA in a conformation that allows 60S ribosomal subunit joining to form the 80S initiation complex. Is released after 80S initiation complex formation, just after GTP hydrolysis by EIF5B, and before release of EIF5B. Its globular part is located in the A site of the 40S ribosomal subunit. Its interaction with EIF5 during scanning contribute to the maintenance of EIF1 within the open 43S PIC. In contrast to yeast orthologs, does not bind EIF1. The polypeptide is Eukaryotic translation initiation factor 1A, X-chromosomal (EIF1AX) (Homo sapiens (Human)).